Reading from the N-terminus, the 571-residue chain is MSERYSGPLVVEGKLADAERMKQESNYLRGTITDDLNDGLTGGFNGDNFLLIRFHGMYQQDDRDIRAERAEQKLEPRHAMMLRCRLPGGVMTPQQWLAIDKFAGEKTLYGSIRITNRQTFQFHGILKGDLKSAHQLLHEVGLDALATANDVNRNVLCTSNPVESELHQQAYEWAKKISEHLLPRTRAYAEVWLDKEKVATTDEEPILGPTYLPRKFKTTVVIPPQNDVDLHANDLNFVAISDNGQLVGFNVLVGGGLSIAHGDKTTYPRTASELGYIPLAQTLAVAEAVVTTQRDWGNRTNRKNAKTKYTLERVGVDTFKQEVERRAGMTFETVRPYAFTGRGDRIGWVKGIDNKWHLTLFIENGRLLDYPGRPLKTGMAEIAKIHKGDFRLTANQNLIVAGVATRDKAKIEALARQYGLIDDSVTEQRQNSMACVSLPTCPLAMAEAERFLPEFVTQVEGIMHKHGVGDDHIVLRVTGCPNGCGRAMLAEIGLVGKAIGRYNLHIGGNREGTRIPRMYRENITEKEILTEIDQLVARWAGERHSGEGFGDFAIRVGIVKPVLDPAIDFYD.

4 residues coordinate [4Fe-4S] cluster: Cys-435, Cys-441, Cys-480, and Cys-484. A siroheme-binding site is contributed by Cys-484.

The protein belongs to the nitrite and sulfite reductase 4Fe-4S domain family. In terms of assembly, alpha(8)-beta(8). The alpha component is a flavoprotein, the beta component is a hemoprotein. Requires siroheme as cofactor. It depends on [4Fe-4S] cluster as a cofactor.

It carries out the reaction hydrogen sulfide + 3 NADP(+) + 3 H2O = sulfite + 3 NADPH + 4 H(+). It participates in sulfur metabolism; hydrogen sulfide biosynthesis; hydrogen sulfide from sulfite (NADPH route): step 1/1. Its function is as follows. Component of the sulfite reductase complex that catalyzes the 6-electron reduction of sulfite to sulfide. This is one of several activities required for the biosynthesis of L-cysteine from sulfate. The chain is Sulfite reductase [NADPH] hemoprotein beta-component from Dickeya chrysanthemi (strain Ech1591) (Dickeya zeae (strain Ech1591)).